A 174-amino-acid chain; its full sequence is MAPQQKGKQGTKGAKQIVEENKTTLTFYRNMAIGCAAPALLLSFLVFEVTKTSVFMHILSLLILGSSYQFMAFMSQAKYSESGALLDSGNDLNMEGGIAENVKDLIILTSGTLLLALISNYFWLVLLLAPIRAGWMLWGSVIQPWLSQRNAQDDNPQVDEKKQKKMDRRMRRMR.

3 helical membrane-spanning segments follow: residues 30–50 (NMAI…FEVT), 54–74 (VFMH…MAFM), and 111–131 (GTLL…LAPI). Residues 151 to 174 (AQDDNPQVDEKKQKKMDRRMRRMR) are disordered. Positions 163 to 174 (QKKMDRRMRRMR) are enriched in basic residues.

Belongs to the TMEM208 family. As to quaternary structure, interacts with fz. In terms of tissue distribution, expressed in the brain.

The protein resides in the endoplasmic reticulum membrane. Its function is as follows. May play an important role during development and helps to maintain proper levels of Fz. The protein is Transmembrane protein 208 of Drosophila melanogaster (Fruit fly).